The chain runs to 104 residues: Large ribosomal subunit protein uL24 (104 aa).

The protein belongs to the universal ribosomal protein uL24 family. In terms of assembly, part of the 50S ribosomal subunit.

One of two assembly initiator proteins, it binds directly to the 5'-end of the 23S rRNA, where it nucleates assembly of the 50S subunit. Its function is as follows. One of the proteins that surrounds the polypeptide exit tunnel on the outside of the subunit. This is Large ribosomal subunit protein uL24 from Buchnera aphidicola subsp. Baizongia pistaciae (strain Bp).